We begin with the raw amino-acid sequence, 36 residues long: Photosystem I reaction center subunit VIII (36 aa).

Residues 8-28 traverse the membrane as a helical segment; the sequence is SIFVPLVGLVFPAIAIASLFL.

The protein belongs to the PsaI family.

It localises to the plastid. Its subcellular location is the chloroplast thylakoid membrane. In terms of biological role, may help in the organization of the PsaL subunit. The polypeptide is Photosystem I reaction center subunit VIII (Jasminum nudiflorum (Winter jasmine)).